The chain runs to 273 residues: Large ribosomal subunit protein uL2 (273 aa).

2 disordered regions span residues 28–53 (KPFA…TTRH) and 221–273 (RGTA…RRSK). Over residues 39–48 (KSGGRNNNGR) the composition is skewed to low complexity. At K242 the chain carries N6-acetyllysine.

The protein belongs to the universal ribosomal protein uL2 family. As to quaternary structure, part of the 50S ribosomal subunit. Forms a bridge to the 30S subunit in the 70S ribosome.

Its function is as follows. One of the primary rRNA binding proteins. Required for association of the 30S and 50S subunits to form the 70S ribosome, for tRNA binding and peptide bond formation. It has been suggested to have peptidyltransferase activity; this is somewhat controversial. Makes several contacts with the 16S rRNA in the 70S ribosome. The chain is Large ribosomal subunit protein uL2 from Shigella dysenteriae serotype 1 (strain Sd197).